The chain runs to 436 residues: Glutamyl-tRNA(Gln) amidotransferase subunit D (436 aa).

The Asparaginase/glutaminase domain occupies glutamine 91–asparagine 420. Catalysis depends on residues threonine 101, threonine 177, aspartate 178, and lysine 254.

This sequence belongs to the asparaginase 1 family. GatD subfamily. Heterodimer of GatD and GatE.

It catalyses the reaction L-glutamyl-tRNA(Gln) + L-glutamine + ATP + H2O = L-glutaminyl-tRNA(Gln) + L-glutamate + ADP + phosphate + H(+). Functionally, allows the formation of correctly charged Gln-tRNA(Gln) through the transamidation of misacylated Glu-tRNA(Gln) in organisms which lack glutaminyl-tRNA synthetase. The reaction takes place in the presence of glutamine and ATP through an activated gamma-phospho-Glu-tRNA(Gln). The GatDE system is specific for glutamate and does not act on aspartate. The chain is Glutamyl-tRNA(Gln) amidotransferase subunit D from Methanobrevibacter smithii (strain ATCC 35061 / DSM 861 / OCM 144 / PS).